Reading from the N-terminus, the 624-residue chain is MKKNRFTYGLALGALGVVFGDIGTSPLYALKVTLSGIPINQFNILGVLSLIFWSLIIIVSFKYLMIIFRADNDGEGGILALLALMKHKSTKYQPLFYIVAIFGAGLLLGDGMLTPAISVVSAVEGLGTLSDKLYPYVLPIASVILVLLFSLQAKGTARIGYLFGPLILIWFITIAILGILQIVEHPVVLQAINPYHAIAFLVDEGLRGYFLLGGIFLVVTGGEALFADIGHFGKNPIRFSWFFIALPCLLLNYFGQGANLIVRPEEISNPFFMIAPPWFYLPLIIIATVATVIASQAVISATFSLTKQAVLLGLCPKIPIVQTSMLHSGQIYVPQINFILFIGTMAFCLAFKTSDNLAHAYGIAVNLEMLLVDAMVAYAAVSIWRWSTFNVIFLFGLFLLIDLAFLGANTHKFITGGWVPIVLAFFIAFIMYSWRYGLEYLRDNFYMNKEDISKILKQLQYKSLNQLPGVSAIFITDVYDKSGGSFLHFLKLNRSVPENVLIVNYIVDNIPYVHYSQRYEIVCLDEKVCKLVIHYGFMETINIPRSLEKACNKNILPFKFNVDTATFMVEIPNIMASKEKRSLSFYWQEKLFAFLMRNYSANLNIEFYKLPYNRTIAIGTYCIL.

Transmembrane regions (helical) follow at residues Leu10–Leu30, Leu48–Phe68, Pro94–Thr114, Leu133–Ala153, Ile159–Ile179, Phe210–Gly230, Phe242–Val262, Pro270–Ala290, Ile331–Phe351, Ile363–Ile383, Thr388–Ala408, and Phe413–Ser433.

This sequence belongs to the HAK/KUP transporter (TC 2.A.72) family.

It localises to the cell inner membrane. The enzyme catalyses K(+)(in) + H(+)(in) = K(+)(out) + H(+)(out). In terms of biological role, transport of potassium into the cell. Likely operates as a K(+):H(+) symporter. The sequence is that of Probable potassium transport system protein Kup 1 from Legionella pneumophila subsp. pneumophila (strain Philadelphia 1 / ATCC 33152 / DSM 7513).